A 303-amino-acid chain; its full sequence is MIKQRTLKNIIRATGVGLHSGEKVYLTLKPAPVNTGIVFCRADLDPVVQIPARAENVGDTTLSTTLVNGDVKVDTVEHLLSAMAGLGIDNAYVELSASEVPIMDGSAGPFVFLIQSAGLEEQDAPKKFIRILREVTVEEGGKRATFVPFEGFKVSFEIDFDHPVFRDRTQSASVDFSSTSFVKEVSRARTFGFMSDIEYLRKHNLALGGSVENAIVVDKDGVLNEDGLRYEDEFVKHKILDAIGDLYLLGNSLIGEFRGFKSGHALNNRLLRALIEQTDAWEVVTFEDASTAPISYMRPVAAV.

3 residues coordinate Zn(2+): His78, His237, and Asp241. Residue His264 is the Proton donor of the active site.

It belongs to the LpxC family. Zn(2+) is required as a cofactor.

It catalyses the reaction a UDP-3-O-[(3R)-3-hydroxyacyl]-N-acetyl-alpha-D-glucosamine + H2O = a UDP-3-O-[(3R)-3-hydroxyacyl]-alpha-D-glucosamine + acetate. The protein operates within glycolipid biosynthesis; lipid IV(A) biosynthesis; lipid IV(A) from (3R)-3-hydroxytetradecanoyl-[acyl-carrier-protein] and UDP-N-acetyl-alpha-D-glucosamine: step 2/6. Its function is as follows. Catalyzes the hydrolysis of UDP-3-O-myristoyl-N-acetylglucosamine to form UDP-3-O-myristoylglucosamine and acetate, the committed step in lipid A biosynthesis. The protein is UDP-3-O-acyl-N-acetylglucosamine deacetylase of Pseudomonas syringae pv. tomato (strain ATCC BAA-871 / DC3000).